A 647-amino-acid polypeptide reads, in one-letter code: LIM domain kinase 1 (647 aa).

2 LIM zinc-binding domains span residues 25–75 (CASC…CKKD) and 84–137 (CHGC…CGHC). Residues 165–258 (LVSIPASSHG…LLQLTLEHDP (94 aa)) enclose the PDZ domain. Ser210 carries the phosphoserine modification. Thr229 bears the Phosphothreonine mark. A disordered region spans residues 260–319 (DTLGHGLGPETSPLSSPAYTPSGEAGSSARQKPVLRSCSIDRSPGAGSLGSPASQRKDLG). Phosphoserine occurs at positions 298, 302, 307, and 310. Low complexity predominate over residues 302–313 (SPGAGSLGSPAS). The residue at position 323 (Ser323) is a Phosphoserine; by MAPKAPK2. Phosphoserine is present on Ser337. One can recognise a Protein kinase domain in the interval 339 to 604 (LIHGEVLGKG…PSFVKLEHWL (266 aa)). Residues 345–353 (LGKGCFGQA) and Lys368 each bind ATP. Asp460 is a catalytic residue. Position 508 is a phosphothreonine; by ROCK1 and PAK1 (Thr508).

It belongs to the protein kinase superfamily. TKL Ser/Thr protein kinase family. As to quaternary structure, interacts (via LIM domain) with the cytoplasmic domain of NRG1. Interacts with NISCH. Interacts with RLIM and RNF6. Self-associates to form homodimers. Interacts with HSP90AA1; this interaction promotes LIMK1 dimerization and subsequent transphosphorylation. Interacts with CDKN1C. Interacts with SSH1. Interacts with ROCK1. Interacts (via LIM zinc-binding domains) with FAM89B/LRAP25 (via LRR repeat). Forms a tripartite complex with CDC42BPA, CDC42BPB and FAM89B/LRAP25. Autophosphorylated. Phosphorylated on Thr-508 by ROCK1 and PAK1, resulting in activation. Phosphorylated by PAK4 which increases the ability of LIMK1 to phosphorylate cofilin. Phosphorylated at Ser-323 by MAPKAPK2 during activation of VEGFA-induced signaling, which results in activation of LIMK1 and promotion of actin reorganization, cell migration, and tubule formation of endothelial cells. Dephosphorylated and inactivated by SSH1. Phosphorylated by CDC42BP. In terms of processing, ubiquitinated. 'Lys-48'-linked polyubiquitination by RNF6 leads to proteasomal degradation through the 26S proteasome, modulating LIMK1 levels in the growth cone and its effect on axonal outgrowth. Also polyubiquitinated by RLIM. In terms of tissue distribution, highest expression in both adult and fetal nervous system. Detected ubiquitously throughout the different regions of adult brain, with highest levels in the cerebral cortex. Expressed to a lesser extent in heart and skeletal muscle.

The protein resides in the cytoplasm. Its subcellular location is the nucleus. The protein localises to the cytoskeleton. It is found in the cell projection. It localises to the lamellipodium. The enzyme catalyses L-seryl-[protein] + ATP = O-phospho-L-seryl-[protein] + ADP + H(+). It catalyses the reaction L-threonyl-[protein] + ATP = O-phospho-L-threonyl-[protein] + ADP + H(+). Its function is as follows. Serine/threonine-protein kinase that plays an essential role in the regulation of actin filament dynamics. Acts downstream of several Rho family GTPase signal transduction pathways. Activated by upstream kinases including ROCK1, PAK1 and PAK4, which phosphorylate LIMK1 on a threonine residue located in its activation loop. LIMK1 subsequently phosphorylates and inactivates the actin binding/depolymerizing factors cofilin-1/CFL1, cofilin-2/CFL2 and destrin/DSTN, thereby preventing the cleavage of filamentous actin (F-actin), and stabilizing the actin cytoskeleton. In this way LIMK1 regulates several actin-dependent biological processes including cell motility, cell cycle progression, and differentiation. Phosphorylates TPPP on serine residues, thereby promoting microtubule disassembly. Stimulates axonal outgrowth and may be involved in brain development. Has a dominant negative effect on actin cytoskeletal changes. Required for atypical chemokine receptor ACKR2-induced phosphorylation of cofilin (CFL1). The sequence is that of LIM domain kinase 1 (LIMK1) from Homo sapiens (Human).